A 324-amino-acid chain; its full sequence is Beta-ketoacyl-[acyl-carrier-protein] synthase III (324 aa).

Active-site residues include Cys114 and His251. The tract at residues 252–256 (QANLR) is ACP-binding. Asn281 is an active-site residue.

It belongs to the thiolase-like superfamily. FabH family. Homodimer.

Its subcellular location is the cytoplasm. It catalyses the reaction malonyl-[ACP] + acetyl-CoA + H(+) = 3-oxobutanoyl-[ACP] + CO2 + CoA. It participates in lipid metabolism; fatty acid biosynthesis. Catalyzes the condensation reaction of fatty acid synthesis by the addition to an acyl acceptor of two carbons from malonyl-ACP. Catalyzes the first condensation reaction which initiates fatty acid synthesis and may therefore play a role in governing the total rate of fatty acid production. Possesses both acetoacetyl-ACP synthase and acetyl transacylase activities. Its substrate specificity determines the biosynthesis of branched-chain and/or straight-chain of fatty acids. The protein is Beta-ketoacyl-[acyl-carrier-protein] synthase III of Dinoroseobacter shibae (strain DSM 16493 / NCIMB 14021 / DFL 12).